The sequence spans 348 residues: MSPYVFLIISISLFLGTSLTLFSNHWLMAWMGLEINTLAIIPMMTYPNHPRSTEAAIKYFLTQATASMLVMFAIIHNAWMTNQWTLFQMANSAASVLMTLALAMKLGLAPFHFWVPEVTQGIPLSSGMILLTWQKIAPTALLYQISPTLNMKVLITLAFLSTMLGGWGGLNQTHLRKILAYSSIAHMGWMTIVMMINPSLALLNLLIYIIATLTLFLMLNFASVTKIKSLTNLWNKSAPMTTAILLTLLSLGGLPPLTGFMPKWLILQELVSNNNIIMATLMALSALLNLFFYMRIIYASTLTMFPTTNNSKIQWPYPQTKTINIIPTLTIISSLLLPLTPLLTTLMY.

10 helical membrane passes run 2–22 (SPYVFLIISISLFLGTSLTLF), 26–46 (WLMAWMGLEINTLAIIPMMTY), 55–75 (AAIKYFLTQATASMLVMFAII), 96–116 (VLMTLALAMKLGLAPFHFWVP), 149–169 (LNMKVLITLAFLSTMLGGWGG), 178–198 (ILAYSSIAHMGWMTIVMMINP), 199–219 (SLALLNLLIYIIATLTLFLML), 242–262 (TAILLTLLSLGGLPPLTGFMP), 276–296 (IIMATLMALSALLNLFFYMRI), and 323–343 (INIIPTLTIISSLLLPLTPLL).

The protein belongs to the complex I subunit 2 family. As to quaternary structure, core subunit of respiratory chain NADH dehydrogenase (Complex I) which is composed of 45 different subunits. Interacts with TMEM242.

The protein localises to the mitochondrion inner membrane. The enzyme catalyses a ubiquinone + NADH + 5 H(+)(in) = a ubiquinol + NAD(+) + 4 H(+)(out). Core subunit of the mitochondrial membrane respiratory chain NADH dehydrogenase (Complex I) that is believed to belong to the minimal assembly required for catalysis. Complex I functions in the transfer of electrons from NADH to the respiratory chain. The immediate electron acceptor for the enzyme is believed to be ubiquinone. The polypeptide is NADH-ubiquinone oxidoreductase chain 2 (Osphranter robustus (Wallaroo)).